We begin with the raw amino-acid sequence, 25 residues long: Spinigerin (25 aa).

The protein localises to the secreted. Functionally, active against Gram-positive bacteria B.megaterium and M.luteus, Gram-negative bacteria E.coli SBS363 and D22, K.pneumoniae, S.typhimurium and P.aeruginosa, yeast C.albicans and filamentous fungi F.culmorum, N.crassa, N.hematococca and T.viridae. Inactive against Gram-positive bacteria B.subtilis, S.pyogenes, B.thuringiensis and S.aureus, Gram-negative bacteria E.cloacae and E.carotovora and filamentous fungus B.bassiana. The polypeptide is Spinigerin (Pseudacanthotermes spiniger).